We begin with the raw amino-acid sequence, 467 residues long: 2-succinylbenzoate--CoA ligase (467 aa).

This sequence belongs to the ATP-dependent AMP-binding enzyme family. MenE subfamily.

It catalyses the reaction 2-succinylbenzoate + ATP + CoA = 2-succinylbenzoyl-CoA + AMP + diphosphate. It participates in quinol/quinone metabolism; 1,4-dihydroxy-2-naphthoate biosynthesis; 1,4-dihydroxy-2-naphthoate from chorismate: step 5/7. It functions in the pathway quinol/quinone metabolism; menaquinone biosynthesis. Its function is as follows. Converts 2-succinylbenzoate (OSB) to 2-succinylbenzoyl-CoA (OSB-CoA). In Listeria monocytogenes serotype 4b (strain F2365), this protein is 2-succinylbenzoate--CoA ligase.